A 59-amino-acid chain; its full sequence is Light-harvesting protein B-800-850 alpha chain A (59 aa).

At Met-1–Lys-11 the chain is on the cytoplasmic side. Residues Pro-12–Leu-35 traverse the membrane as a helical segment. Residue His-31 participates in a bacteriochlorophyll binding. The Periplasmic segment spans residues Ser-36–Gly-59.

Belongs to the antenna complex alpha subunit family. The core complex is formed by different alpha and beta chains, binding bacteriochlorophyll molecules, and arranged most probably in tetrameric structures disposed around the reaction center. The non-pigmented gamma chains may constitute additional components.

Its subcellular location is the cell inner membrane. In terms of biological role, antenna complexes are light-harvesting systems, which transfer the excitation energy to the reaction centers. In Rhodopseudomonas palustris (strain ATCC BAA-98 / CGA009), this protein is Light-harvesting protein B-800-850 alpha chain A (pucAA).